Consider the following 953-residue polypeptide: MVNNKRKEIENQENDNNDDNDGLLTYKKFKEDINYDSIRSKELQTIAKSLGLPIIGKKQEIYKRIEGYFLSKKVKSDLINSTTNQLQQQPQQPQQQRYVLLIKDVDQLEIYFWKAFRNMIIFKNIFSNFKSKQFGYHDLIGINENFLKSYSNSLEIIKDNIKGNINHQIIRSVNDILNIIKTLKKKDNETISFYNTLFSAFSSTTTQSIKSLIFQFDENIDLWIQRMILNENLVALDQFIKFFKINSDVLKKSIEMHINPSFFNVVTYNNLKIYNYLKSINAIPTSHIKQRFSNIDLSDSLSFDCKLKRLIKSYKLLVDPTNFKKIQEIHQQEEEEQKQQKLNSDKDYIEKLNQLILELSEIESIHFTNDQLNSTIKNLLNQTTTTTTTTTTTTTTTTPILITNNNNSGDIKDIIKKYYKSIYLFFKIIKEGNLYNRNLMKPIHYYLYFKKEKSLIQLYEIFCGKNYTHYLIFFKSILMDQNLEKNQILELVSNILDIENGVPFQNIGCIYNFNLRSFNSFCKVVFSINDTELIDHLIKTIKKLQLVYDSKTKFPSISEIISTNFQYINKNEIVDFFFENYRNETTLFDDQNQNWYNGHVNIIDHYEKLMESIEKRLRLNIVYYYDWFTNVNKINEKKYNINILLDQLKRAISKPLLYSFFNDSGYYYNKLLIIFGWSLENGNEFLINNILSNEQFKQPFRFSEIIDSVLPPNKMSNSVKLIFNNISKESIESKLYQVKVKFNFSYVHGYYYDDFIPLTSTISTTTTTTTTNSEEVGQFIIGETKSFDFTISPRILFVCLYYLDRVDDIFYLFDKIPEIFNSGYFSNFTQESYLYNICSSYYLGLFINYFIENLNDNTINHLYTCLCVASRKGFIQIFQDILSSNKNSQYLLKVRTKTNQSSLFQSNLLCDMVVNSINSSNFQLSNLLIDFIDFSPKNEKVLRSKIFKSSNNK.

Positions 1 to 10 (MVNNKRKEIE) are enriched in basic and acidic residues. The tract at residues 1–23 (MVNNKRKEIENQENDNNDDNDGL) is disordered. The span at 11–21 (NQENDNNDDND) shows a compositional bias: acidic residues. In terms of domain architecture, SAP spans 35-69 (YDSIRSKELQTIAKSLGLPIIGKKQEIYKRIEGYF).

This sequence belongs to the UPF0746 family.

The sequence is that of UPF0746 protein DDB_G0281301 from Dictyostelium discoideum (Social amoeba).